The chain runs to 434 residues: Maltoporin (434 aa).

Residues 1 to 25 (MMTTLRKLPLALAIAAGVLTTQAMA) form the signal peptide.

The protein belongs to the porin LamB (TC 1.B.3) family. As to quaternary structure, homotrimer formed of three 18-stranded antiparallel beta-barrels, containing three independent channels.

The protein resides in the cell outer membrane. The catalysed reaction is beta-maltose(in) = beta-maltose(out). In terms of biological role, involved in the transport of maltose and maltodextrins. This Serratia proteamaculans (strain 568) protein is Maltoporin.